The following is a 516-amino-acid chain: Maturase K (516 aa).

This sequence belongs to the intron maturase 2 family. MatK subfamily.

The protein localises to the plastid. The protein resides in the chloroplast. Usually encoded in the trnK tRNA gene intron. Probably assists in splicing its own and other chloroplast group II introns. The protein is Maturase K of Cypripedium calceolus (Yellow lady's slipper).